The chain runs to 72 residues: U-actitoxin-Aeq5b (72 aa).

A signal peptide spans 1 to 20; that stretch reads MNQVMTIFLVLGVIVYSVES. 4 disulfides stabilise this stretch: Cys33-Cys71, Cys37-Cys66, Cys44-Cys59, and Cys50-Cys56.

It belongs to the Acrorhagin I family. In terms of tissue distribution, expressed by acrorhagi.

It localises to the secreted. It is found in the nematocyst. Its function is as follows. Toxin that is lethal to crab. It interacts with divalent metal ions (zinc and nickel) suggesting it may function as a metal ion chelator to regulate metal ion levels or as a metal ion transporter, or that its function is modulated by metal ions. Is not active against any of the voltage-gated potassium and sodium channels tested. In addition, it does not show activity in bacterial and fungal growth inhibitory assays as well as in hemolytic assays. The chain is U-actitoxin-Aeq5b from Actinia equina (Beadlet anemone).